The sequence spans 123 residues: Small ribosomal subunit protein uS12 (123 aa).

Residue Asp89 is modified to 3-methylthioaspartic acid.

It belongs to the universal ribosomal protein uS12 family. Part of the 30S ribosomal subunit. Contacts proteins S8 and S17. May interact with IF1 in the 30S initiation complex.

In terms of biological role, with S4 and S5 plays an important role in translational accuracy. Its function is as follows. Interacts with and stabilizes bases of the 16S rRNA that are involved in tRNA selection in the A site and with the mRNA backbone. Located at the interface of the 30S and 50S subunits, it traverses the body of the 30S subunit contacting proteins on the other side and probably holding the rRNA structure together. The combined cluster of proteins S8, S12 and S17 appears to hold together the shoulder and platform of the 30S subunit. The sequence is that of Small ribosomal subunit protein uS12 from Bartonella tribocorum (strain CIP 105476 / IBS 506).